Consider the following 431-residue polypeptide: Histidinol dehydrogenase (431 aa).

NAD(+)-binding residues include Tyr127, Gln189, and Asn212. Ser237, Gln259, and His262 together coordinate substrate. 2 residues coordinate Zn(2+): Gln259 and His262. Catalysis depends on proton acceptor residues Glu326 and His327. Substrate-binding residues include His327, Asp360, Glu414, and His419. Asp360 is a Zn(2+) binding site. His419 serves as a coordination point for Zn(2+).

Belongs to the histidinol dehydrogenase family. Requires Zn(2+) as cofactor.

It carries out the reaction L-histidinol + 2 NAD(+) + H2O = L-histidine + 2 NADH + 3 H(+). The protein operates within amino-acid biosynthesis; L-histidine biosynthesis; L-histidine from 5-phospho-alpha-D-ribose 1-diphosphate: step 9/9. Catalyzes the sequential NAD-dependent oxidations of L-histidinol to L-histidinaldehyde and then to L-histidine. The protein is Histidinol dehydrogenase of Xanthomonas campestris pv. campestris (strain ATCC 33913 / DSM 3586 / NCPPB 528 / LMG 568 / P 25).